The sequence spans 341 residues: MLSNPSELVTRNIEQLENQRVMLINIEADELGHHLTRHCSEVAALALDFNHFQAQPSGKSGFRCEFGHQWSRDEKFDVVVVYFPKAKALAPYLFALAAWHLRPDGTLLITGENKGGIRSVDKLLGNAFSPACKIDNARHCLLYSATLVAEATKPNAEDWVSRYRLSLPSGDIQICNMVGVFSDKQLDQGTALLLDNLPKLEGRVLDFGCGAGVIAIALMQQNPGLQLECVDINAMALLSCELSLKANGMEAKVYASDGLAQTDGLFNAIVSNPPFHDGLSSTTDIATRFVADSYKQLHKGGNWQIVANRHLPYSDTIAKVFGEVNTVAENNKYKVYANKKR.

The protein belongs to the methyltransferase superfamily. RsmC family. Monomer.

The protein localises to the cytoplasm. It carries out the reaction guanosine(1207) in 16S rRNA + S-adenosyl-L-methionine = N(2)-methylguanosine(1207) in 16S rRNA + S-adenosyl-L-homocysteine + H(+). In terms of biological role, specifically methylates the guanine in position 1207 of 16S rRNA in the 30S particle. The sequence is that of Ribosomal RNA small subunit methyltransferase C from Shewanella amazonensis (strain ATCC BAA-1098 / SB2B).